A 235-amino-acid polypeptide reads, in one-letter code: Ribonuclease PH (235 aa).

Phosphate is bound by residues R86 and 124–126 (GTR).

The protein belongs to the RNase PH family. In terms of assembly, homohexameric ring arranged as a trimer of dimers.

It catalyses the reaction tRNA(n+1) + phosphate = tRNA(n) + a ribonucleoside 5'-diphosphate. Its function is as follows. Phosphorolytic 3'-5' exoribonuclease that plays an important role in tRNA 3'-end maturation. Removes nucleotide residues following the 3'-CCA terminus of tRNAs; can also add nucleotides to the ends of RNA molecules by using nucleoside diphosphates as substrates, but this may not be physiologically important. Probably plays a role in initiation of 16S rRNA degradation (leading to ribosome degradation) during starvation. The polypeptide is Ribonuclease PH (Francisella tularensis subsp. novicida (strain U112)).